A 78-amino-acid polypeptide reads, in one-letter code: Putative permease-like protein YdzE (78 aa).

3 consecutive transmembrane segments (helical) span residues 2 to 22, 27 to 47, and 49 to 69; these read YLGI…LQLL, GGLF…ILLG, and QIGG…LLVI. Residues 2–70 enclose the EamA domain; the sequence is YLGIVSTACA…ILSGVLLVIK (69 aa).

The protein belongs to the EamA transporter family.

It localises to the cell membrane. This chain is Putative permease-like protein YdzE (ydzE), found in Bacillus subtilis (strain 168).